The primary structure comprises 615 residues: Dihydroxy-acid dehydratase (615 aa).

D85 contacts Mg(2+). Position 126 (C126) interacts with [2Fe-2S] cluster. Residues D127 and K128 each coordinate Mg(2+). K128 bears the N6-carboxylysine mark. [2Fe-2S] cluster is bound at residue C199. E495 serves as a coordination point for Mg(2+). The active-site Proton acceptor is S521.

The protein belongs to the IlvD/Edd family. Homodimer. [2Fe-2S] cluster serves as cofactor. Requires Mg(2+) as cofactor.

The enzyme catalyses (2R)-2,3-dihydroxy-3-methylbutanoate = 3-methyl-2-oxobutanoate + H2O. It carries out the reaction (2R,3R)-2,3-dihydroxy-3-methylpentanoate = (S)-3-methyl-2-oxopentanoate + H2O. Its pathway is amino-acid biosynthesis; L-isoleucine biosynthesis; L-isoleucine from 2-oxobutanoate: step 3/4. It participates in amino-acid biosynthesis; L-valine biosynthesis; L-valine from pyruvate: step 3/4. Functionally, functions in the biosynthesis of branched-chain amino acids. Catalyzes the dehydration of (2R,3R)-2,3-dihydroxy-3-methylpentanoate (2,3-dihydroxy-3-methylvalerate) into 2-oxo-3-methylpentanoate (2-oxo-3-methylvalerate) and of (2R)-2,3-dihydroxy-3-methylbutanoate (2,3-dihydroxyisovalerate) into 2-oxo-3-methylbutanoate (2-oxoisovalerate), the penultimate precursor to L-isoleucine and L-valine, respectively. The protein is Dihydroxy-acid dehydratase of Mannheimia succiniciproducens (strain KCTC 0769BP / MBEL55E).